Here is a 128-residue protein sequence, read N- to C-terminus: ATP synthase epsilon chain (128 aa).

The disordered stretch occupies residues Glu98–Arg128. Residues Arg118–Arg128 are compositionally biased toward basic residues.

This sequence belongs to the ATPase epsilon chain family. F-type ATPases have 2 components, CF(1) - the catalytic core - and CF(0) - the membrane proton channel. CF(1) has five subunits: alpha(3), beta(3), gamma(1), delta(1), epsilon(1). CF(0) has three main subunits: a, b and c.

Its subcellular location is the cell inner membrane. In terms of biological role, produces ATP from ADP in the presence of a proton gradient across the membrane. The protein is ATP synthase epsilon chain of Rhodopirellula baltica (strain DSM 10527 / NCIMB 13988 / SH1).